We begin with the raw amino-acid sequence, 180 residues long: Endogenous alpha-amylase/subtilisin inhibitor (180 aa).

2 disulfide bridges follow: Cys-42–Cys-89 and Cys-143–Cys-147.

This sequence belongs to the protease inhibitor I3 (leguminous Kunitz-type inhibitor) family.

Its function is as follows. Inhibitor of endogenous alpha-amylase (wheat also produces an exogenous inhibitor which inactivates alpha-amylase from animal and insect origin). This inhibitor can also inhibit subtilisin. The protein is Endogenous alpha-amylase/subtilisin inhibitor of Triticum aestivum (Wheat).